The following is a 929-amino-acid chain: Ribonucleoside-diphosphate reductase large chain (929 aa).

Residues 1–92 (MYVKKRDGRQ…VSNLHKQTKK (92 aa)) form the ATP-cone domain. Residues 5 to 6 (KR), 11 to 17 (ERVQFDK), Thr53, and Asp57 contribute to the ATP site. Residues Ser202 and Ser217 each coordinate GDP. Cysteines 218 and 444 form a disulfide. Residues 226–228 (DSI), Lys243, Arg256, and 263–264 (AG) contribute to the dTTP site. Asn427 is a binding site for GDP. Catalysis depends on Asn427, which acts as the Proton acceptor. Cys429 functions as the Cysteine radical intermediate in the catalytic mechanism. GDP is bound by residues Glu431 and 605-608 (TAST). The active-site Proton acceptor is the Glu431. Positions 789-904 (ENTSGPRPYA…RDENIYSNAP (116 aa)) are disordered. Residues 800-809 (TGVSGTSTPI) show a composition bias toward polar residues. The segment covering 868 to 884 (VKTEDIGSPLLERKEGQ) has biased composition (basic and acidic residues). Residues 885-894 (NEDVDEDSQE) are compositionally biased toward acidic residues.

It belongs to the ribonucleoside diphosphate reductase large chain family.

It catalyses the reaction a 2'-deoxyribonucleoside 5'-diphosphate + [thioredoxin]-disulfide + H2O = a ribonucleoside 5'-diphosphate + [thioredoxin]-dithiol. Its activity is regulated as follows. Under complex allosteric control mediated by deoxynucleoside triphosphates and ATP binding to separate specificity and activation sites on the large subunit. The type of nucleotide bound at the specificity site determines substrate preference. It seems probable that ATP makes the enzyme reduce CDP and UDP, dGTP favors ADP reduction and dTTP favors GDP reduction. Stimulated by ATP and inhibited by dATP binding to the activity site. Provides the precursors necessary for DNA synthesis. Catalyzes the biosynthesis of deoxyribonucleotides from the corresponding ribonucleotides. The sequence is that of Ribonucleoside-diphosphate reductase large chain (rnr-1) from Neurospora crassa (strain ATCC 24698 / 74-OR23-1A / CBS 708.71 / DSM 1257 / FGSC 987).